The chain runs to 423 residues: MASPRVFPLSCVVQQYAWGKVGSKSEVACLLASSDPLAQISEDKPYAELWMGTHPRGDAKILDNRISQKTLGQWIAENPDCLGSKVKNTFNGKLPFLFKVLSVDTALSIQAHPNKELAEKLHLQAPEHYPDANHKPEMAIALTSFQGLCGFRPVEEIVTFMKKVPEFQLLIGDDATAQLKESVGGDTEAMASALRNCFSHLMKSEKKVVVEQLNLLVKRISQQVFDGNNMEDIYGKLLLQLHQQHPGDIGCFAIYFLNLLTLKPGEAMFLDANVPHAYLKGDCVECMACSDNTVRAGLTPKFIDVPTLCEMLNYTPSPSNNRLFAPAQSQDDPYLSIYDPPVPDFTVMKMEVPSSVTEYKVSTLDSASILLMVQGTVTAIIPSAHAEIPLYRGGVLFIAANESVLLKITVPKDLLIFRACCLL.

At A2 the chain carries N-acetylalanine. Phosphoserine is present on residues S102 and S108. Residues Q110, H112, E137, and H276 each coordinate Zn(2+). The active site involves R295.

Belongs to the mannose-6-phosphate isomerase type 1 family. Zn(2+) serves as cofactor. In terms of tissue distribution, expressed in all tissues, but more abundant in testis.

It localises to the cytoplasm. The enzyme catalyses D-mannose 6-phosphate = D-fructose 6-phosphate. The protein operates within nucleotide-sugar biosynthesis; GDP-alpha-D-mannose biosynthesis; alpha-D-mannose 1-phosphate from D-fructose 6-phosphate: step 1/2. In terms of biological role, isomerase that catalyzes the interconversion of fructose-6-P and mannose-6-P and has a critical role in the supply of D-mannose derivatives required for many eukaryotic glycosylation reactions. The protein is Mannose-6-phosphate isomerase of Mus musculus (Mouse).